We begin with the raw amino-acid sequence, 646 residues long: Peptidylprolyl isomerase domain and WD repeat-containing protein 1 (646 aa).

Residues 1–30 (MAAESGSDFQQRRRRRRDPEEPEKTELSER) are disordered. Residue alanine 2 is modified to N-acetylalanine. The span at 17–30 (RDPEEPEKTELSER) shows a compositional bias: basic and acidic residues. WD repeat units follow at residues 88-126 (MHRDVITHVVCTKTDFIITASHDGHVKFWKKIEEGIEFV), 131-170 (SHLGVIECIAVSSEGALFCSVGDDKAMKVFDVVNFDMINM), 221-260 (LHTSPLTQIRLNPVYKAVVSSDKSGMIEYWTGPPHEYKFP), and 278-319 (KCKA…RVFD). A compositionally biased stretch (basic and acidic residues) spans 455 to 478 (EPEDTKSADSDRDVFNEKPSKEEV). The disordered stretch occupies residues 455–490 (EPEDTKSADSDRDVFNEKPSKEEVMAATQAEGPKRV). Positions 490–645 (VSDSAIIHTS…EDVSIINITV (156 aa)) constitute a PPIase cyclophilin-type domain.

This sequence belongs to the cyclophilin-type PPIase family. PPIL1 subfamily. Identified in the spliceosome C complex.

Its subcellular location is the nucleus. It carries out the reaction [protein]-peptidylproline (omega=180) = [protein]-peptidylproline (omega=0). Its activity is regulated as follows. Inhibited by cyclosporin A (CsA). Functionally, PPIase that catalyzes the cis-trans isomerization of proline imidic peptide bonds in oligopeptides and may therefore assist protein folding. May be involved in pre-mRNA splicing. The sequence is that of Peptidylprolyl isomerase domain and WD repeat-containing protein 1 from Pongo abelii (Sumatran orangutan).